The primary structure comprises 96 residues: Aspartyl/glutamyl-tRNA(Asn/Gln) amidotransferase subunit C (96 aa).

This sequence belongs to the GatC family. As to quaternary structure, heterotrimer of A, B and C subunits.

It catalyses the reaction L-glutamyl-tRNA(Gln) + L-glutamine + ATP + H2O = L-glutaminyl-tRNA(Gln) + L-glutamate + ADP + phosphate + H(+). It carries out the reaction L-aspartyl-tRNA(Asn) + L-glutamine + ATP + H2O = L-asparaginyl-tRNA(Asn) + L-glutamate + ADP + phosphate + 2 H(+). In terms of biological role, allows the formation of correctly charged Asn-tRNA(Asn) or Gln-tRNA(Gln) through the transamidation of misacylated Asp-tRNA(Asn) or Glu-tRNA(Gln) in organisms which lack either or both of asparaginyl-tRNA or glutaminyl-tRNA synthetases. The reaction takes place in the presence of glutamine and ATP through an activated phospho-Asp-tRNA(Asn) or phospho-Glu-tRNA(Gln). In Exiguobacterium sibiricum (strain DSM 17290 / CCUG 55495 / CIP 109462 / JCM 13490 / 255-15), this protein is Aspartyl/glutamyl-tRNA(Asn/Gln) amidotransferase subunit C.